A 155-amino-acid polypeptide reads, in one-letter code: Sperm microtubule associated protein 1 (155 aa).

The protein is Sperm microtubule associated protein 1 (Spmap1) of Mus musculus (Mouse).